The sequence spans 184 residues: Ferredoxin-thioredoxin reductase subunit A2, chloroplastic (184 aa).

The N-terminal 71 residues, 1-71 (MTNSYALSPA…SRKNPKSTIR (71 aa)), are a transit peptide targeting the chloroplast.

The protein belongs to the ferredoxin thioredoxin reductase alpha subunit family. In terms of assembly, heterodimer of subunit A (variable subunit) and subunit B (catalytic subunit). Heterodimeric FTR forms a complex with ferredoxin and thioredoxin.

Its subcellular location is the plastid. It localises to the chloroplast. Functionally, variable subunit of the ferredoxin-thioredoxin reductase (FTR), which catalyzes the two-electron reduction of thioredoxins by the electrons provided by reduced ferredoxin. The sequence is that of Ferredoxin-thioredoxin reductase subunit A2, chloroplastic from Arabidopsis thaliana (Mouse-ear cress).